Reading from the N-terminus, the 544-residue chain is Formate--tetrahydrofolate ligase (544 aa).

Residue Thr63 to Ser70 coordinates ATP.

The protein belongs to the formate--tetrahydrofolate ligase family.

It catalyses the reaction (6S)-5,6,7,8-tetrahydrofolate + formate + ATP = (6R)-10-formyltetrahydrofolate + ADP + phosphate. It functions in the pathway one-carbon metabolism; tetrahydrofolate interconversion. This chain is Formate--tetrahydrofolate ligase, found in Fusobacterium nucleatum subsp. nucleatum (strain ATCC 25586 / DSM 15643 / BCRC 10681 / CIP 101130 / JCM 8532 / KCTC 2640 / LMG 13131 / VPI 4355).